A 92-amino-acid chain; its full sequence is Small ribosomal subunit protein uS19c (92 aa).

This sequence belongs to the universal ribosomal protein uS19 family.

Its subcellular location is the plastid. The protein localises to the chloroplast. Protein S19 forms a complex with S13 that binds strongly to the 16S ribosomal RNA. The polypeptide is Small ribosomal subunit protein uS19c (rps19) (Pinus thunbergii (Japanese black pine)).